The chain runs to 435 residues: Glutamyl-tRNA reductase (435 aa).

Substrate-binding positions include 49-52, Ser109, 114-116, and Gln120; these read TCNR and EGQ. The Nucleophile role is filled by Cys50. NADP(+) is bound at residue 198–203; that stretch reads GAGRMS.

Belongs to the glutamyl-tRNA reductase family. As to quaternary structure, homodimer.

The catalysed reaction is (S)-4-amino-5-oxopentanoate + tRNA(Glu) + NADP(+) = L-glutamyl-tRNA(Glu) + NADPH + H(+). It participates in porphyrin-containing compound metabolism; protoporphyrin-IX biosynthesis; 5-aminolevulinate from L-glutamyl-tRNA(Glu): step 1/2. The protein operates within porphyrin-containing compound metabolism; chlorophyll biosynthesis. Catalyzes the NADPH-dependent reduction of glutamyl-tRNA(Glu) to glutamate 1-semialdehyde (GSA). This chain is Glutamyl-tRNA reductase, found in Prochlorococcus marinus (strain MIT 9211).